The following is a 265-amino-acid chain: Mlc titration factor A (265 aa).

Residues His111, His148, His152, and Glu211 each coordinate Zn(2+).

It belongs to the MtfA family. As to quaternary structure, interacts with Mlc. Zn(2+) is required as a cofactor.

The protein localises to the cytoplasm. In terms of biological role, involved in the modulation of the activity of the glucose-phosphotransferase system (glucose-PTS). Interacts with the transcriptional repressor Mlc, preventing its interaction with DNA and leading to the modulation of expression of genes regulated by Mlc, including ptsG, which encodes the PTS system glucose-specific EIICB component. Functionally, shows zinc-dependent metallopeptidase activity. This is Mlc titration factor A from Salmonella enteritidis PT4 (strain P125109).